The chain runs to 552 residues: Chaperonin GroEL (552 aa).

ATP-binding positions include 30-33 (TLGP), Lys51, 87-91 (DGTTT), Gly415, 480-482 (NAA), and Asp496.

It belongs to the chaperonin (HSP60) family. As to quaternary structure, forms a cylinder of 14 subunits composed of two heptameric rings stacked back-to-back. Interacts with the co-chaperonin GroES.

Its subcellular location is the cytoplasm. The enzyme catalyses ATP + H2O + a folded polypeptide = ADP + phosphate + an unfolded polypeptide.. In terms of biological role, together with its co-chaperonin GroES, plays an essential role in assisting protein folding. The GroEL-GroES system forms a nano-cage that allows encapsulation of the non-native substrate proteins and provides a physical environment optimized to promote and accelerate protein folding. The polypeptide is Chaperonin GroEL (Coxiella burnetii (strain RSA 331 / Henzerling II)).